Consider the following 189-residue polypeptide: UPF0301 protein PFL_5830 (189 aa).

This sequence belongs to the UPF0301 (AlgH) family.

This is UPF0301 protein PFL_5830 from Pseudomonas fluorescens (strain ATCC BAA-477 / NRRL B-23932 / Pf-5).